Consider the following 563-residue polypeptide: 2-isopropylmalate synthase (563 aa).

One can recognise a Pyruvate carboxyltransferase domain in the interval Pro-31 to Asn-305. Mg(2+) is bound by residues Asp-40, His-244, His-246, and Asn-280. A regulatory domain region spans residues Arg-437 to Glu-563.

It belongs to the alpha-IPM synthase/homocitrate synthase family. LeuA type 2 subfamily. In terms of assembly, homodimer. Requires Mg(2+) as cofactor.

It localises to the cytoplasm. It catalyses the reaction 3-methyl-2-oxobutanoate + acetyl-CoA + H2O = (2S)-2-isopropylmalate + CoA + H(+). The protein operates within amino-acid biosynthesis; L-leucine biosynthesis; L-leucine from 3-methyl-2-oxobutanoate: step 1/4. Catalyzes the condensation of the acetyl group of acetyl-CoA with 3-methyl-2-oxobutanoate (2-ketoisovalerate) to form 3-carboxy-3-hydroxy-4-methylpentanoate (2-isopropylmalate). This chain is 2-isopropylmalate synthase, found in Parvibaculum lavamentivorans (strain DS-1 / DSM 13023 / NCIMB 13966).